A 120-amino-acid chain; its full sequence is MPTPKRRLGEVGEQAAAAYLERCGYTIIARNWRCRDGEIDLVAREGDQIVFVEVRTRHDQHALETITLAKQQRLVALAYHYLSAHDLPATTRWRIDVIALTARGGRIVDYDHVIAAVGED.

The protein belongs to the UPF0102 family.

This is UPF0102 protein Caur_2698 from Chloroflexus aurantiacus (strain ATCC 29366 / DSM 635 / J-10-fl).